A 261-amino-acid chain; its full sequence is Imidazole glycerol phosphate synthase subunit HisF (261 aa).

Active-site residues include Asp-16 and Asp-135.

Belongs to the HisA/HisF family. In terms of assembly, heterodimer of HisH and HisF.

It is found in the cytoplasm. The enzyme catalyses 5-[(5-phospho-1-deoxy-D-ribulos-1-ylimino)methylamino]-1-(5-phospho-beta-D-ribosyl)imidazole-4-carboxamide + L-glutamine = D-erythro-1-(imidazol-4-yl)glycerol 3-phosphate + 5-amino-1-(5-phospho-beta-D-ribosyl)imidazole-4-carboxamide + L-glutamate + H(+). It participates in amino-acid biosynthesis; L-histidine biosynthesis; L-histidine from 5-phospho-alpha-D-ribose 1-diphosphate: step 5/9. IGPS catalyzes the conversion of PRFAR and glutamine to IGP, AICAR and glutamate. The HisF subunit catalyzes the cyclization activity that produces IGP and AICAR from PRFAR using the ammonia provided by the HisH subunit. The chain is Imidazole glycerol phosphate synthase subunit HisF from Mycolicibacterium smegmatis (strain ATCC 700084 / mc(2)155) (Mycobacterium smegmatis).